Consider the following 332-residue polypeptide: Nuclear hormone receptor family member nhr-9 (332 aa).

The nuclear receptor DNA-binding region spans 11–85 (ERRCAICSKL…MGMRIVTNQY (75 aa)). NR C4-type zinc fingers lie at residues 14 to 34 (CAIC…CNAC) and 50 to 73 (CINN…YNKC). The NR LBD domain maps to 101 to 332 (DRSNKLMNFQ…KRLCAELLGA (232 aa)).

It belongs to the nuclear hormone receptor family.

It localises to the nucleus. Orphan nuclear receptor. In Caenorhabditis elegans, this protein is Nuclear hormone receptor family member nhr-9 (nhr-9).